The sequence spans 435 residues: Trigger factor (435 aa).

In terms of domain architecture, PPIase FKBP-type spans 163 to 248 (GDYVTFDFKG…IKEIKVKELP (86 aa)).

This sequence belongs to the FKBP-type PPIase family. Tig subfamily.

It localises to the cytoplasm. It carries out the reaction [protein]-peptidylproline (omega=180) = [protein]-peptidylproline (omega=0). Involved in protein export. Acts as a chaperone by maintaining the newly synthesized protein in an open conformation. Functions as a peptidyl-prolyl cis-trans isomerase. This Geotalea daltonii (strain DSM 22248 / JCM 15807 / FRC-32) (Geobacter daltonii) protein is Trigger factor.